We begin with the raw amino-acid sequence, 174 residues long: Small ribosomal subunit protein uS5 (174 aa).

Positions 19–82 (LREKMVAINR…DEARRKMVKV (64 aa)) constitute an S5 DRBM domain.

It belongs to the universal ribosomal protein uS5 family. As to quaternary structure, part of the 30S ribosomal subunit. Contacts proteins S4 and S8.

With S4 and S12 plays an important role in translational accuracy. Its function is as follows. Located at the back of the 30S subunit body where it stabilizes the conformation of the head with respect to the body. This is Small ribosomal subunit protein uS5 from Azoarcus sp. (strain BH72).